Consider the following 300-residue polypeptide: Free fatty acid receptor 1 (300 aa).

Over 1-8 the chain is Extracellular; the sequence is MDLPPQLS. Residues 9-31 traverse the membrane as a helical segment; that stretch reads FALYVSAFALGFPLNLLAIRGAV. Over 32-41 the chain is Cytoplasmic; that stretch reads SHAKLRLTPS. A helical membrane pass occupies residues 42–64; sequence LVYTLHLGCSDLLLAITLPLKAV. Residues 65–79 lie on the Extracellular side of the membrane; it reads EALASGAWPLPLPFC. A disulfide bridge links Cys-79 with Cys-170. A helical membrane pass occupies residues 80 to 101; it reads PVFALAHFAPLYAGGGFLAALS. Topologically, residues 102-121 are cytoplasmic; that stretch reads AGRYLGAAFPFGYQAIRRPR. A helical transmembrane segment spans residues 122–142; it reads YSWGVCVAIWALVLCHLGLAL. The Extracellular segment spans residues 143-178; that stretch reads GLETSGSWLDNSTSSLGINIPVNGSPVCLEAWDPDS. Asn-153 carries an N-linked (GlcNAc...) asparagine glycan. A helical membrane pass occupies residues 179–200; it reads ARPARLSFSILLFFLPLVITAF. The Cytoplasmic segment spans residues 201–223; sequence CYVGCLRALVRSGLSHKRKLRAA. A helical transmembrane segment spans residues 224-248; it reads WVAGGALLTLLLCLGPYNASNVASF. The Extracellular segment spans residues 249-256; the sequence is INPDLGGS. A helical transmembrane segment spans residues 257–279; that stretch reads WRKLGLITGAWSVVLNPLVTGYL. The Cytoplasmic segment spans residues 280–300; that stretch reads GTGPGRGTICVTRTQRGTIQK.

It belongs to the G-protein coupled receptor 1 family. As to expression, expressed in pancreatic islet beta cells (at protein level). Expressed in pancreatic islet beta cells.

It is found in the cell membrane. Its activity is regulated as follows. Is also activated by synthetic agonists, such as AM-8182, AM-6331 and TAK-875 (fasiglifam). AM-8182 is a full agonist, while AM-6331 and TAK-875 (fasiglifam) are partial agonists that potentiate the activity of the endogenous ligands, such as alpha-linolenic acid and gamma-linolenic acid. Its function is as follows. G-protein coupled receptor for medium and long chain saturated and unsaturated fatty acids that plays an important role in glucose homeostasis. Fatty acid binding increases glucose-stimulated insulin secretion, and may also enhance the secretion of glucagon-like peptide 1 (GLP-1). May also play a role in bone homeostasis; receptor signaling activates pathways that inhibit osteoclast differentiation. Ligand binding leads to a conformation change that triggers signaling via G-proteins that activate phospholipase C, leading to an increase of the intracellular calcium concentration. Seems to act through a G(q) and G(i)-mediated pathway. Mediates the anti-inflammatory effects of omega-3 polyunsaturated fatty acids (PUFAs) via inhibition of NLRP3 inflammasome activation. This Mus musculus (Mouse) protein is Free fatty acid receptor 1 (Ffar1).